A 269-amino-acid chain; its full sequence is Formamidopyrimidine-DNA glycosylase (269 aa).

Proline 2 (schiff-base intermediate with DNA) is an active-site residue. Glutamate 3 acts as the Proton donor in catalysis. Lysine 57 serves as the catalytic Proton donor; for beta-elimination activity. The DNA site is built by histidine 90, arginine 109, and lysine 150. Residues 235–269 (FVYGRAGEPCRICGEQIESIKLGQRSTFFCRHCQY) form an FPG-type zinc finger. Catalysis depends on arginine 259, which acts as the Proton donor; for delta-elimination activity.

Belongs to the FPG family. As to quaternary structure, monomer. Requires Zn(2+) as cofactor.

It carries out the reaction Hydrolysis of DNA containing ring-opened 7-methylguanine residues, releasing 2,6-diamino-4-hydroxy-5-(N-methyl)formamidopyrimidine.. The enzyme catalyses 2'-deoxyribonucleotide-(2'-deoxyribose 5'-phosphate)-2'-deoxyribonucleotide-DNA = a 3'-end 2'-deoxyribonucleotide-(2,3-dehydro-2,3-deoxyribose 5'-phosphate)-DNA + a 5'-end 5'-phospho-2'-deoxyribonucleoside-DNA + H(+). Involved in base excision repair of DNA damaged by oxidation or by mutagenic agents. Acts as a DNA glycosylase that recognizes and removes damaged bases. Has a preference for oxidized purines, such as 7,8-dihydro-8-oxoguanine (8-oxoG). Has AP (apurinic/apyrimidinic) lyase activity and introduces nicks in the DNA strand. Cleaves the DNA backbone by beta-delta elimination to generate a single-strand break at the site of the removed base with both 3'- and 5'-phosphates. This Photorhabdus laumondii subsp. laumondii (strain DSM 15139 / CIP 105565 / TT01) (Photorhabdus luminescens subsp. laumondii) protein is Formamidopyrimidine-DNA glycosylase.